The primary structure comprises 281 residues: 18S rRNA (guanine-N(7))-methyltransferase (281 aa).

Residues 212-231 (LPKGLTESQDADQASESMFT) show a composition bias toward polar residues. Residues 212–281 (LPKGLTESQD…YTGRKRKPRF (70 aa)) form a disordered region. Over residues 242 to 256 (RDLVKKSREWVLEKK) the composition is skewed to basic and acidic residues.

The protein belongs to the class I-like SAM-binding methyltransferase superfamily. BUD23/WBSCR22 family. As to quaternary structure, heterodimer with TRMT112; this heterodimerization is necessary for the metabolic stability and activity of the catalytic subunit BUD23. Interacts with GRIP1. May be ubiquitinated and targeted to degradation in response to pro-inflammatory cytokine signaling.

The protein resides in the nucleus. The protein localises to the nucleoplasm. It is found in the cytoplasm. Its subcellular location is the perinuclear region. The catalysed reaction is a guanosine in 18S rRNA + S-adenosyl-L-methionine = an N(7)-methylguanosine in 18S rRNA + S-adenosyl-L-homocysteine. S-adenosyl-L-methionine-dependent methyltransferase that specifically methylates the N(7) position of a guanine in 18S rRNA. Requires the methyltransferase adapter protein TRM112 for full rRNA methyltransferase activity. Involved in the pre-rRNA processing steps leading to small-subunit rRNA production independently of its RNA-modifying catalytic activity. Important for biogenesis end export of the 40S ribosomal subunit independent on its methyltransferase activity. Locus-specific steroid receptor coactivator. Potentiates transactivation by glucocorticoid (NR3C1), mineralocorticoid (NR3C2), androgen (AR) and progesterone (PGR) receptors. Required for the maintenance of open chromatin at the TSC22D3/GILZ locus to facilitate NR3C1 loading on the response elements. Required for maintenance of dimethylation on histone H3 'Lys-79' (H3K79me2), although direct histone methyltransferase activity is not observed in vitro. The chain is 18S rRNA (guanine-N(7))-methyltransferase from Mus musculus (Mouse).